Consider the following 906-residue polypeptide: Protein translocase subunit SecA (906 aa).

Residues glutamine 86, 104 to 108, and aspartate 511 contribute to the ATP site; that span reads GEGKT. Composition is skewed to basic and acidic residues over residues 853–865 and 877–888; these read HESV…RHDE and VRREGPKVKRND. A disordered region spans residues 853–906; it reads HESVIDNNQRHDEDEQEEAPKVQQVRREGPKVKRNDPCPCGSGKKYKQCHSKVE. The Zn(2+) site is built by cysteine 890, cysteine 892, cysteine 901, and histidine 902. Over residues 896 to 906 the composition is skewed to basic residues; that stretch reads KKYKQCHSKVE.

It belongs to the SecA family. As to quaternary structure, monomer and homodimer. Part of the essential Sec protein translocation apparatus which comprises SecA, SecYEG and auxiliary proteins SecDF-YajC and YidC. Zn(2+) is required as a cofactor.

It localises to the cell inner membrane. The protein resides in the cytoplasm. It catalyses the reaction ATP + H2O + cellular proteinSide 1 = ADP + phosphate + cellular proteinSide 2.. Functionally, part of the Sec protein translocase complex. Interacts with the SecYEG preprotein conducting channel. Has a central role in coupling the hydrolysis of ATP to the transfer of proteins into and across the cell membrane, serving both as a receptor for the preprotein-SecB complex and as an ATP-driven molecular motor driving the stepwise translocation of polypeptide chains across the membrane. In Francisella tularensis subsp. tularensis (strain WY96-3418), this protein is Protein translocase subunit SecA.